We begin with the raw amino-acid sequence, 364 residues long: Histidinol-phosphate aminotransferase (364 aa).

An N6-(pyridoxal phosphate)lysine modification is found at Lys226.

Belongs to the class-II pyridoxal-phosphate-dependent aminotransferase family. Histidinol-phosphate aminotransferase subfamily. Homodimer. Pyridoxal 5'-phosphate is required as a cofactor.

It catalyses the reaction L-histidinol phosphate + 2-oxoglutarate = 3-(imidazol-4-yl)-2-oxopropyl phosphate + L-glutamate. Its pathway is amino-acid biosynthesis; L-histidine biosynthesis; L-histidine from 5-phospho-alpha-D-ribose 1-diphosphate: step 7/9. The protein is Histidinol-phosphate aminotransferase of Campylobacter jejuni subsp. jejuni serotype O:23/36 (strain 81-176).